The following is a 120-amino-acid chain: Large ribosomal subunit protein bL19 (120 aa).

It belongs to the bacterial ribosomal protein bL19 family.

This protein is located at the 30S-50S ribosomal subunit interface and may play a role in the structure and function of the aminoacyl-tRNA binding site. The protein is Large ribosomal subunit protein bL19 of Marinomonas sp. (strain MWYL1).